A 387-amino-acid polypeptide reads, in one-letter code: MKIRETGTRQQHNLRRARIGCVILKKNVTFTMGIRFSRWLVGCGVAIAFGVLSPSVTWANPQLNALLEQGNEQLTNRNFAQAVQHYRQALTLEANNARIHGALGYALSQLGNYSEAVTAYRRATELEDDNAEFFNALGFNLAQSGDNRSAINAYQRATQLQPNNLAYSLGLATVQFRAGDYDQALVAYRKVLAKDSNNTMALQNSLTSLLQLGRNQEAAVLFPDLLRQRPNDAELRIKAAVTWFGLNDRDQAIAFLEEARRLSTRDSAMQIRVGKIYETQNLLPQAIAAYEQASFVDPQSREAFALYGSAAMKTEDYINAIIAYRALTELSPTDPAAFYNFAVALQGRRRSREALEALEMARDLYQQRGDRRGVNITESLMAAIEEG.

TPR repeat units follow at residues 63-96 (LNAL…EANN), 97-130 (ARIH…EDDN), 132-164 (EFFN…QPNN), 166-198 (AYSL…DSNN), 200-232 (MALQ…RPND), 233-266 (AELR…STRD), 267-300 (SAMQ…DPQS), 302-334 (EAFA…SPTD), and 336-368 (AAFY…YQQR).

This Picosynechococcus sp. (strain ATCC 27264 / PCC 7002 / PR-6) (Agmenellum quadruplicatum) protein is TPR repeat-containing protein SYNPCC7002_A0425.